The following is a 199-amino-acid chain: Probable nicotinate-nucleotide adenylyltransferase (199 aa).

Belongs to the NadD family.

It carries out the reaction nicotinate beta-D-ribonucleotide + ATP + H(+) = deamido-NAD(+) + diphosphate. It participates in cofactor biosynthesis; NAD(+) biosynthesis; deamido-NAD(+) from nicotinate D-ribonucleotide: step 1/1. Its function is as follows. Catalyzes the reversible adenylation of nicotinate mononucleotide (NaMN) to nicotinic acid adenine dinucleotide (NaAD). The chain is Probable nicotinate-nucleotide adenylyltransferase from Corynebacterium jeikeium (strain K411).